The chain runs to 2116 residues: Non-structural polyprotein p200 (2116 aa).

The required for efficient proteolysis and P150-P90 interaction stretch occupies residues 36–49 (EVRDVVTAAQKRAI). The 191-residue stretch at 57 to 247 (VFTQMQVSDH…TRPCTTRIYQ (191 aa)) folds into the Alphavirus-like MT domain. Positions 715–779 (GQLAATSPPP…PVPPTTAEPA (65 aa)) are disordered. Composition is skewed to pro residues over residues 721-730 (SPPPGDPPPP) and 745-775 (TPPP…PPTT). Short sequence motifs (pxxPxR; class II SH3-binding) lie at residues 727–732 (PPPPRR), 747–752 (PPAPVR), and 761–766 (PPAPPR). Residues 806–985 (SDIVESYARA…LTHASVLVGA (180 aa)) enclose the Macro domain. Residues 992 to 1031 (VSPPPTEPLASCPAGDPGRPAQRSASPPATPLGDATAPEP) form a disordered region. The Peptidase C27 domain maps to 1000–1301 (LASCPAGDPG…WLAVPLSRGG (302 aa)). Cys1152 acts as the For cysteine protease activity in catalysis. The segment at 1152-1183 (CWLRAAANVAQAARACGAYTSAGCPKCAYGRA) is interaction with host CALM1. The Zn(2+) site is built by Cys1175, Cys1178, Cys1227, and His1273. Residues 1193 to 1228 (FAALSQWWSASHADASPDGTGDPLDPLMETVGCACS) are EF-hand-like. His1273 serves as the catalytic For cysteine protease activity. A (+)RNA virus helicase ATP-binding domain is found at 1320-1468 (EVRRLGDDAM…VPDRWPTGRS (149 aa)). 1352-1359 (MAAGAGKT) lines the a ribonucleoside 5'-triphosphate pocket. In terms of domain architecture, (+)RNA virus helicase C-terminal spans 1469-1609 (RHTWRFPDCW…ELKEVPAGID (141 aa)). Residues 1700 to 1900 (YRAGEDGSTL…VELEISAALL (201 aa)) form an involved in P150-P90 interaction region. A RdRp catalytic domain is found at 1870 to 1981 (TNAIEVDFTE…FLPEGARNAA (112 aa)). The Human RB1 binding motif lies at 1902-1906 (LPCAE).

As to quaternary structure, interacts with RNA-directed RNA polymerase p90. Interacts with host CALM1; this interaction is necessary for the protease activity and viral infectivity. Interacts with host C1QBP. Interacts with the capsid protein. In terms of assembly, interacts with human RB1/retinoblastoma protein. Interacts with protease/methyltransferase p150. Requires Zn(2+) as cofactor. In terms of processing, specific enzymatic cleavage by its own cysteine protease yield mature proteins p150 and p90.

The protein localises to the host membrane. The protein resides in the host cytoplasm. Its subcellular location is the host perinuclear region. It carries out the reaction RNA(n) + a ribonucleoside 5'-triphosphate = RNA(n+1) + diphosphate. The enzyme catalyses a ribonucleoside 5'-triphosphate + H2O = a ribonucleoside 5'-diphosphate + phosphate + H(+). It catalyses the reaction ATP + H2O = ADP + phosphate + H(+). Functionally, probable principal replicase for the negative-strand DNA, which replicates the 40S (+) genomic RNA into (-) antigenomic RNA. It cannot replicate the (-) into (+) until cleaved into p150 and p90 mature proteins. Its function is as follows. Protease that cleaves the precursor polyprotein into two mature products. Together with RNA-directed RNA polymerase p90, replicates the 40S genomic and antigenomic RNA by recognizing replications specific signals. The heterodimer P150/p90 is probably the principal replicase for positive-strand genomic RNA and the 24S subgenomic RNA, which codes for structural proteins. Responsible for the mRNA-capping of the viral mRNAs. This function is necessary since all viral RNAs are synthesized in the cytoplasm, and host capping enzymes are restricted to the nucleus. Forms fibers late in the infection that may be involved in cell-to-cell spread of the virus RNA in the absence of virus particle formation. Together with protease/methyltransferase p150, replicates the 40S genomic and antigenomic RNA by recognizing replications specific signals. The heterodimer P150/p90 is probably the principal replicase for positive-strand genomic RNA and the 24S subgenomic RNA, which codes for structural proteins. A helicase activity is probably also present. The polypeptide is Non-structural polyprotein p200 (Rubella virus (strain M33) (RUBV)).